The sequence spans 111 residues: Distal membrane-arm assembly complex protein 1 (111 aa).

Residues 1–11 are compositionally biased toward polar residues; it reads MGSSFSGSTEF. The segment at 1-40 is disordered; sequence MGSSFSGSTEFSAPAPPTVSTAVPANPPAKSAVPASPARD. The segment covering 18–38 has biased composition (low complexity); that stretch reads TVSTAVPANPPAKSAVPASPA. 2 helical membrane-spanning segments follow: residues 51–68 and 81–101; these read VLSGSTLFGAGTYVYLVA and GTVLQMVIGISIACWGVVVLV.

In terms of assembly, interacts with incompletely assembled mitochondrial NADH:ubiquinone oxidoreductase complex (complex I).

It is found in the mitochondrion inner membrane. In terms of biological role, required for the assembly of the mitochondrial NADH:ubiquinone oxidoreductase complex (complex I). Involved in the assembly of the distal region of complex I. This is Distal membrane-arm assembly complex protein 1 from Mus musculus (Mouse).